A 180-amino-acid polypeptide reads, in one-letter code: Adenine phosphoribosyltransferase (180 aa).

The protein belongs to the purine/pyrimidine phosphoribosyltransferase family. In terms of assembly, homodimer.

The protein resides in the cytoplasm. The catalysed reaction is AMP + diphosphate = 5-phospho-alpha-D-ribose 1-diphosphate + adenine. It participates in purine metabolism; AMP biosynthesis via salvage pathway; AMP from adenine: step 1/1. In terms of biological role, catalyzes a salvage reaction resulting in the formation of AMP, that is energically less costly than de novo synthesis. The polypeptide is Adenine phosphoribosyltransferase (Agrobacterium fabrum (strain C58 / ATCC 33970) (Agrobacterium tumefaciens (strain C58))).